Consider the following 342-residue polypeptide: Tryptophan--tRNA ligase (342 aa).

ATP is bound by residues 19–21 (QPS) and 27–28 (GN). The short motif at 20 to 28 (PSGELTIGN) is the 'HIGH' region element. Asp143 serves as a coordination point for L-tryptophan. ATP-binding positions include 155–157 (GED), Val194, and 203–207 (KMSKS). The short motif at 203 to 207 (KMSKS) is the 'KMSKS' region element.

This sequence belongs to the class-I aminoacyl-tRNA synthetase family. Homodimer.

Its subcellular location is the cytoplasm. The enzyme catalyses tRNA(Trp) + L-tryptophan + ATP = L-tryptophyl-tRNA(Trp) + AMP + diphosphate + H(+). Functionally, catalyzes the attachment of tryptophan to tRNA(Trp). This chain is Tryptophan--tRNA ligase, found in Yersinia pestis.